The primary structure comprises 136 residues: MLQPKKTKHRKTFRLYHDKRDAHSGNFVAFGDYGLQATGSAWVSAAQIEAARIAITRRMGREGQVIIRVFPHLALTSKPIGVRMGSGKGSVDRWVAVVKRNTILFEVRGVKDEIARDALRLGGHKLPLKWKIVATV.

It belongs to the universal ribosomal protein uL16 family. Part of the 50S ribosomal subunit.

Functionally, binds 23S rRNA and is also seen to make contacts with the A and possibly P site tRNAs. The polypeptide is Large ribosomal subunit protein uL16 (Mesomycoplasma hyopneumoniae (strain 232) (Mycoplasma hyopneumoniae)).